A 463-amino-acid polypeptide reads, in one-letter code: NADH dehydrogenase [ubiquinone] iron-sulfur protein 2, mitochondrial (463 aa).

The N-terminal 33 residues, 1–33 (MAALRALCGFRGVAAQVLRPGAGVRLPIQPSRG), are a transit peptide targeting the mitochondrion. Residue K62 is modified to N6-acetyllysine. R118 is subject to Symmetric dimethylarginine. Positions 326, 332, and 347 each coordinate [4Fe-4S] cluster.

It belongs to the complex I 49 kDa subunit family. In terms of assembly, core subunit of respiratory chain NADH dehydrogenase (Complex I) which is composed of 45 different subunits. Component of the iron-sulfur (IP) fragment of the enzyme. Interacts with NDUFAF3. Interacts with NDUFAF7. Interacts with CERS2. [4Fe-4S] cluster serves as cofactor. In terms of processing, dimethylation at Arg-118 by NDUFAF7 takes place after NDUFS2 assembles into the complex I, leading to stabilize the early intermediate complex.

The protein resides in the mitochondrion inner membrane. It carries out the reaction a ubiquinone + NADH + 5 H(+)(in) = a ubiquinol + NAD(+) + 4 H(+)(out). Its function is as follows. Core subunit of the mitochondrial membrane respiratory chain NADH dehydrogenase (Complex I) which catalyzes electron transfer from NADH through the respiratory chain, using ubiquinone as an electron acceptor. Essential for the catalytic activity and assembly of complex I. Redox-sensitive, critical component of the oxygen-sensing pathway in the pulmonary vasculature which plays a key role in acute pulmonary oxygen-sensing and hypoxic pulmonary vasoconstriction. Plays an important role in carotid body sensing of hypoxia. Essential for glia-like neural stem and progenitor cell proliferation, differentiation and subsequent oligodendrocyte or neuronal maturation. The polypeptide is NADH dehydrogenase [ubiquinone] iron-sulfur protein 2, mitochondrial (NDUFS2) (Pan troglodytes (Chimpanzee)).